The following is a 559-amino-acid chain: Malate synthase, glyoxysomal (559 aa).

Residue arginine 173 is the Proton acceptor of the active site. Aspartate 459 (proton donor) is an active-site residue. The short motif at 557–559 (CKL) is the Microbody targeting signal element.

This sequence belongs to the malate synthase family.

It localises to the glyoxysome. The catalysed reaction is glyoxylate + acetyl-CoA + H2O = (S)-malate + CoA + H(+). The protein operates within carbohydrate metabolism; glyoxylate cycle; (S)-malate from isocitrate: step 2/2. In Zea mays (Maize), this protein is Malate synthase, glyoxysomal (LIP).